Here is a 521-residue protein sequence, read N- to C-terminus: Bifunctional purine biosynthesis protein PurH (521 aa).

An MGS-like domain is found at 1–145 (MIKQALISVS…KNHRDVTVVV (145 aa)).

It belongs to the PurH family.

It carries out the reaction (6R)-10-formyltetrahydrofolate + 5-amino-1-(5-phospho-beta-D-ribosyl)imidazole-4-carboxamide = 5-formamido-1-(5-phospho-D-ribosyl)imidazole-4-carboxamide + (6S)-5,6,7,8-tetrahydrofolate. The catalysed reaction is IMP + H2O = 5-formamido-1-(5-phospho-D-ribosyl)imidazole-4-carboxamide. It functions in the pathway purine metabolism; IMP biosynthesis via de novo pathway; 5-formamido-1-(5-phospho-D-ribosyl)imidazole-4-carboxamide from 5-amino-1-(5-phospho-D-ribosyl)imidazole-4-carboxamide (10-formyl THF route): step 1/1. The protein operates within purine metabolism; IMP biosynthesis via de novo pathway; IMP from 5-formamido-1-(5-phospho-D-ribosyl)imidazole-4-carboxamide: step 1/1. This chain is Bifunctional purine biosynthesis protein PurH, found in Burkholderia thailandensis (strain ATCC 700388 / DSM 13276 / CCUG 48851 / CIP 106301 / E264).